A 607-amino-acid polypeptide reads, in one-letter code: Matrix metalloproteinase-16 (607 aa).

A signal peptide spans 1–31 (MILLTFSTGRRLDFVHHSGVFFLQTLLWILC). A propeptide spanning residues 32-119 (ATVCGTEQYF…SSKFHIRRKR (88 aa)) is cleaved from the precursor. An N-linked (GlcNAc...) asparagine glycan is attached at Asn-83. The short motif at 99–106 (PRCGVPDQ) is the Cysteine switch element. Position 101 (Cys-101) interacts with Zn(2+). The Extracellular portion of the chain corresponds to 120–564 (YALTGQKWQH…LDNTASTVKA (445 aa)). Residue Asp-183 coordinates Ca(2+). Zn(2+)-binding residues include His-193 and Asp-195. Residues Asp-200, Gly-201, Gly-203, and Phe-205 each coordinate Ca(2+). A Zn(2+)-binding site is contributed by His-208. Ca(2+) is bound by residues Gly-215, Gly-217, and Asp-219. His-221 lines the Zn(2+) pocket. Asp-223 and Glu-226 together coordinate Ca(2+). His-246 lines the Zn(2+) pocket. The active site involves Glu-247. 2 residues coordinate Zn(2+): His-250 and His-256. Residues 281–340 (DDLQGIQKIYGPPDKIPPPTRPLPTVPPHRSIPPADPRKNDRPKPPRPPTGRPSYPGAKP) form a disordered region. The span at 294–315 (DKIPPPTRPLPTVPPHRSIPPA) shows a compositional bias: pro residues. 4 Hemopexin repeats span residues 340–388 (PNIC…WRGL), 389–434 (PPSI…GSGI), 436–484 (PHGI…KGIP), and 485–532 (ESPQ…FMGC). Cys-343 and Cys-532 are disulfide-bonded. Residues 565-585 (IAIVIPCILALCLLVLVYTVF) form a helical membrane-spanning segment. Over 586-607 (QFKRKGTPRHILYCKRSMQEWV) the chain is Cytoplasmic.

The protein belongs to the peptidase M10A family. Interacts with CSPG4 through CSPG4 chondroitin sulfate glycosaminoglycan. Zn(2+) is required as a cofactor. The cofactor is Ca(2+). The precursor is cleaved by a furin endopeptidase. As to expression, expressed in heart, brain, placenta, ovary and small intestine. Isoform Short is found in the ovary.

The protein localises to the cell membrane. The protein resides in the secreted. It is found in the extracellular space. It localises to the extracellular matrix. Its subcellular location is the cell surface. TIMP-2 shows little inhibitory activity compared to TIMP-1. TIMP-1 seems to have less binding affinity than TIMP-2 for the short isoform. Functionally, endopeptidase that degrades various components of the extracellular matrix, such as collagen type III and fibronectin. Activates progelatinase A. Involved in the matrix remodeling of blood vessels. Isoform short cleaves fibronectin and also collagen type III, but at lower rate. It has no effect on type I, II, IV and V collagen. However, upon interaction with CSPG4, it may be involved in degradation and invasion of type I collagen by melanoma cells. The polypeptide is Matrix metalloproteinase-16 (Homo sapiens (Human)).